Reading from the N-terminus, the 117-residue chain is Large ribosomal subunit protein bL20 (117 aa).

Belongs to the bacterial ribosomal protein bL20 family.

Binds directly to 23S ribosomal RNA and is necessary for the in vitro assembly process of the 50S ribosomal subunit. It is not involved in the protein synthesizing functions of that subunit. The sequence is that of Large ribosomal subunit protein bL20 from Limosilactobacillus fermentum (strain NBRC 3956 / LMG 18251) (Lactobacillus fermentum).